The following is a 195-amino-acid chain: MDLEKGKKPSEQAAACRIMQVKDKLITLQPVVRACVFLATAVAAVIMGLNKQSYTTVVAIVGTRPVTQTFTAKFKDTPAFVFFVIANAIASGYNLMVLVTRRILQRRAQSLSVHLLDMVILTLLATGSATAASMAQLGKNGNLHARWNPICDKFGSFCNHGGIALMSSFIGVALMLALNLLSAAANSPRSNVTGQ.

Residues M1–L25 lie on the Cytoplasmic side of the membrane. A helical membrane pass occupies residues I26–I46. The Extracellular portion of the chain corresponds to M47–P78. Residues A79–V99 form a helical membrane-spanning segment. Residues T100–H114 lie on the Cytoplasmic side of the membrane. Residues L115–A135 form a helical membrane-spanning segment. Residues Q136–H160 lie on the Extracellular side of the membrane. The helical transmembrane segment at G161–L181 threads the bilayer. Residues S182–Q195 lie on the Cytoplasmic side of the membrane.

Belongs to the Casparian strip membrane proteins (CASP) family. Homodimer and heterodimers.

Its subcellular location is the cell membrane. This chain is CASP-like protein 1B1, found in Oryza sativa subsp. indica (Rice).